The primary structure comprises 490 residues: Cardiolipin synthase 1 (490 aa).

A run of 2 helical transmembrane segments spans residues 9 to 29 (ILTI…FVII) and 42 to 62 (WAWL…YLFL). PLD phosphodiesterase domains lie at 225-252 (MNNR…GDDY) and 403-430 (QNGF…DFRS). Residues His230, Lys232, Asp237, His408, Lys410, and Asp415 contribute to the active site.

This sequence belongs to the phospholipase D family. Cardiolipin synthase subfamily.

The protein localises to the cell membrane. The enzyme catalyses 2 a 1,2-diacyl-sn-glycero-3-phospho-(1'-sn-glycerol) = a cardiolipin + glycerol. Its function is as follows. Catalyzes the reversible phosphatidyl group transfer from one phosphatidylglycerol molecule to another to form cardiolipin (CL) (diphosphatidylglycerol) and glycerol. This chain is Cardiolipin synthase 1 (cls1), found in Staphylococcus epidermidis (strain ATCC 35984 / DSM 28319 / BCRC 17069 / CCUG 31568 / BM 3577 / RP62A).